Here is a 99-residue protein sequence, read N- to C-terminus: Beta-2-microglobulin (99 aa).

The Ig-like C1-type domain maps to Pro-5–Thr-92. Cys-25 and Cys-80 are disulfide-bonded.

The protein belongs to the beta-2-microglobulin family. In terms of assembly, heterodimer of an alpha chain and a beta chain. Beta-2-microglobulin is the beta-chain of major histocompatibility complex class I molecules.

It is found in the secreted. In terms of biological role, component of the class I major histocompatibility complex (MHC). Involved in the presentation of peptide antigens to the immune system. This Oryctolagus cuniculus (Rabbit) protein is Beta-2-microglobulin (B2M).